The chain runs to 440 residues: Ribosomal protein uS12 methylthiotransferase RimO (440 aa).

Residues 6 to 116 enclose the MTTase N-terminal domain; the sequence is PKVGFVSLGC…VVSAVHEVVP (111 aa). [4Fe-4S] cluster contacts are provided by cysteine 15, cysteine 51, cysteine 80, cysteine 149, cysteine 153, and cysteine 156. The region spanning 135–374 is the Radical SAM core domain; it reads LTPRHYAYLK…AHQQAISSAR (240 aa). Positions 376-440 constitute a TRAM domain; that stretch reads QAKIGLEMDV…DEYDMWGELV (65 aa).

It belongs to the methylthiotransferase family. RimO subfamily. [4Fe-4S] cluster is required as a cofactor.

Its subcellular location is the cytoplasm. The enzyme catalyses L-aspartate(89)-[ribosomal protein uS12]-hydrogen + (sulfur carrier)-SH + AH2 + 2 S-adenosyl-L-methionine = 3-methylsulfanyl-L-aspartate(89)-[ribosomal protein uS12]-hydrogen + (sulfur carrier)-H + 5'-deoxyadenosine + L-methionine + A + S-adenosyl-L-homocysteine + 2 H(+). In terms of biological role, catalyzes the methylthiolation of an aspartic acid residue of ribosomal protein uS12. This chain is Ribosomal protein uS12 methylthiotransferase RimO, found in Ectopseudomonas mendocina (strain ymp) (Pseudomonas mendocina).